A 235-amino-acid polypeptide reads, in one-letter code: Large ribosomal subunit protein uL4 (235 aa).

Positions arginine 45–histidine 75 are disordered. Basic residues predominate over residues tryptophan 65 to histidine 75.

Belongs to the universal ribosomal protein uL4 family. Part of the 50S ribosomal subunit.

In terms of biological role, one of the primary rRNA binding proteins, this protein initially binds near the 5'-end of the 23S rRNA. It is important during the early stages of 50S assembly. It makes multiple contacts with different domains of the 23S rRNA in the assembled 50S subunit and ribosome. Its function is as follows. This protein only weakly controls expression of the E.coli S10 operon. It is incorporated into E.coli ribosomes, however it is not as firmly associated as the endogenous protein. Functionally, forms part of the polypeptide exit tunnel. The sequence is that of Large ribosomal subunit protein uL4 (rplD) from Thermotoga maritima (strain ATCC 43589 / DSM 3109 / JCM 10099 / NBRC 100826 / MSB8).